Consider the following 129-residue polypeptide: Follitropin subunit beta (129 aa).

The N-terminal stretch at 1 to 18 (MKSVQFCFLFCCWKAICC) is a signal peptide. Cystine bridges form between Cys21–Cys69, Cys35–Cys84, Cys38–Cys122, Cys46–Cys100, Cys50–Cys102, and Cys105–Cys112. Residues Asn25 and Asn42 are each glycosylated (N-linked (GlcNAc...) asparagine).

Belongs to the glycoprotein hormones subunit beta family. As to quaternary structure, heterodimer. The active follitropin is a heterodimer composed of an alpha chain/CGA shared with other hormones and a unique beta chain/FSHB shown here.

Its subcellular location is the secreted. Functionally, together with the alpha chain CGA constitutes follitropin, the follicle-stimulating hormone, and provides its biological specificity to the hormone heterodimer. Binds FSHR, a G protein-coupled receptor, on target cells to activate downstream signaling pathways. Follitropin is involved in follicle development and spermatogenesis in reproductive organs. This Oryctolagus cuniculus (Rabbit) protein is Follitropin subunit beta (FSHB).